An 841-amino-acid chain; its full sequence is MTQVTVKELAKVVDTPVERLLQQMREAGLSHTAAEQVVTDNEKQALLTHLKSGHKAKVEEPRKITLQRKTTSTLRVAGSKSISVEVRKKKVFVQRSPEEIEAERKREMDERRAVENAARQKAEEEAKRRAEEDARSQPAASQSAPAAAEPVAAAEPVREAAPAAAPAPASAAPSADARKRDEQRRPDKPRADDRNARGGDGERKNAPHRASVKEKAPAPRVAPRTTDEESDSFRRGGRGKGKLKKRNAHGFQSPTGPVIRDVAIGETITVGELSAQMSVKAAEVIKFMFKMGTPVTINQVLDQETAQLIAEELGHKVTLVSDNALEDSLAESLKFEGESFSRAPVVTVMGHVDHGKTSLLDYIRRAKVAAGEAGGITQHIGAYHVETERGMVTFLDTPGHAAFTAMRARGAKATDIVILVVAADDGVMPQTIEAVQHAVAAGVPLVVAVNKIDKPGADLDRIRSELSVHGVTSEEWGGDTPFVSVSAKMGTGVDELLEAVLLQAEVLELKATPSAPGRGVVVESRLDKGRGPVATVLVQDGTLRQGDMVLVGSNFGRIRAMLDENGKPVKEAGPSIPVEILGLDGTPDAGDEMSVLSDEKKAREVALFRQGKFREVKLARAHAGKLENIFENMGQAEKKTLNIVLKSDVRGSLEALNGALNGLGNDEVQVRVVGGGVGGITESDANLALASNAVLFGFNVRADAGARKIVEQEGLDMRYYNVIYDIIEDVKKALTGMLGSDVRENILGIAEVRDVFRSPKFGAIAGCMVLEGTVYRNRPIRVLREDIVIFEGELESLRRFKDDAAEVRAGMECGIGVKSYNDVKVGDKIEVFEKVQVARSL.

A disordered region spans residues 87-254; sequence RKKKVFVQRS…KRNAHGFQSP (168 aa). Residues 96 to 135 are compositionally biased toward basic and acidic residues; sequence SPEEIEAERKREMDERRAVENAARQKAEEEAKRRAEEDAR. Low complexity predominate over residues 136 to 175; it reads SQPAASQSAPAAAEPVAAAEPVREAAPAAAPAPASAAPSA. Basic and acidic residues-rich tracts occupy residues 176 to 217 and 225 to 234; these read DARK…EKAP and TTDEESDSFR. Residues 235 to 248 are compositionally biased toward basic residues; it reads RGGRGKGKLKKRNA. The 170-residue stretch at 341-510 folds into the tr-type G domain; it reads SRAPVVTVMG…LLQAEVLELK (170 aa). A G1 region spans residues 350 to 357; it reads GHVDHGKT. 350-357 serves as a coordination point for GTP; that stretch reads GHVDHGKT. Residues 375–379 form a G2 region; that stretch reads GITQH. Residues 396 to 399 form a G3 region; it reads DTPG. GTP contacts are provided by residues 396-400 and 450-453; these read DTPGH and NKID. A G4 region spans residues 450 to 453; that stretch reads NKID. The interval 486–488 is G5; that stretch reads SAK.

It belongs to the TRAFAC class translation factor GTPase superfamily. Classic translation factor GTPase family. IF-2 subfamily.

It localises to the cytoplasm. Functionally, one of the essential components for the initiation of protein synthesis. Protects formylmethionyl-tRNA from spontaneous hydrolysis and promotes its binding to the 30S ribosomal subunits. Also involved in the hydrolysis of GTP during the formation of the 70S ribosomal complex. In Pseudomonas syringae pv. syringae (strain B728a), this protein is Translation initiation factor IF-2.